The chain runs to 159 residues: MQLAIVAVGHKMPAWIETGFNEYTKRMPPELRIELREVKPETRSSSNNAATVMQREAARIEAVLGSLSKQCRIVALDERGKDWTTVQLAEQLTGWQREGGDVAFLIGGADGLDPALKARAHTLLRISSLTLPHGMVRVLLAEQLYRAWSVTQNHPYHRA.

Residues leucine 76, glycine 107, and 126-131 each bind S-adenosyl-L-methionine; that span reads ISSLTL.

It belongs to the RNA methyltransferase RlmH family. In terms of assembly, homodimer.

The protein resides in the cytoplasm. The enzyme catalyses pseudouridine(1915) in 23S rRNA + S-adenosyl-L-methionine = N(3)-methylpseudouridine(1915) in 23S rRNA + S-adenosyl-L-homocysteine + H(+). Functionally, specifically methylates the pseudouridine at position 1915 (m3Psi1915) in 23S rRNA. In Cupriavidus metallidurans (strain ATCC 43123 / DSM 2839 / NBRC 102507 / CH34) (Ralstonia metallidurans), this protein is Ribosomal RNA large subunit methyltransferase H.